Reading from the N-terminus, the 101-residue chain is Small ribosomal subunit protein bS18c (101 aa).

The segment covering 1–19 (MNKSKRPFTKSKRSFRRRL) has biased composition (basic residues). Positions 1 to 20 (MNKSKRPFTKSKRSFRRRLP) are disordered.

The protein belongs to the bacterial ribosomal protein bS18 family. Part of the 30S ribosomal subunit.

It is found in the plastid. The protein resides in the chloroplast. This Arabis hirsuta (Hairy rock-cress) protein is Small ribosomal subunit protein bS18c.